A 212-amino-acid chain; its full sequence is FMN-dependent NAD(P)H:quinone oxidoreductase 1 (212 aa).

FMN contacts are provided by residues serine 10, 16 to 18 (SQS), and 97 to 100 (MYNF). The substrate site is built by asparagine 99 and tyrosine 131. Residues 145–148 (SRGG) and glutamate 187 contribute to the FMN site. Glutamate 188 contributes to the substrate binding site.

It belongs to the azoreductase type 1 family. Homodimer. Homotetramer formed by a dimer of dimers when the ionic strength is high. FMN serves as cofactor.

It catalyses the reaction 2 a quinone + NADPH + H(+) = 2 a 1,4-benzosemiquinone + NADP(+). The catalysed reaction is 2 a quinone + NADH + H(+) = 2 a 1,4-benzosemiquinone + NAD(+). It carries out the reaction N,N-dimethyl-1,4-phenylenediamine + anthranilate + 2 NAD(+) = 2-(4-dimethylaminophenyl)diazenylbenzoate + 2 NADH + 2 H(+). With respect to regulation, azoreductase activity increases with salt strength. In terms of biological role, quinone reductase that provides resistance to thiol-specific stress caused by electrophilic quinones. Shows a preference for benzoquinones. Functionally, also exhibits azoreductase activity. Catalyzes the reductive cleavage of the azo bond in aromatic azo compounds to the corresponding amines. NADPH is the preferred electron donor for azoreductase activity, but it can also use NADH. Can reduce different classes of azo dyes, including the common azo dyes methyl red and p-aminoazobenzene sulfonamide (PAABSA). Can activate several azo pro-drugs used in the treatment of inflammatory bowel disease (IBD), including balsalazide, sulfasalazine and olsalazine. Also acts as a nitrodeductase, and can reduce and hence activate the nitroaromatic drug nitrofurazone, a broad spectrum antibiotic. This Pseudomonas aeruginosa (strain ATCC 15692 / DSM 22644 / CIP 104116 / JCM 14847 / LMG 12228 / 1C / PRS 101 / PAO1) protein is FMN-dependent NAD(P)H:quinone oxidoreductase 1.